A 236-amino-acid polypeptide reads, in one-letter code: Ribonuclease HII (236 aa).

Positions 27–219 (RILCGVDEAG…VRRALDGAPP (193 aa)) constitute an RNase H type-2 domain. D33, E34, and D128 together coordinate a divalent metal cation. Positions 212–236 (RALDGAPPPAGDAVPQTDAKTAWAD) are disordered.

This sequence belongs to the RNase HII family. Mn(2+) serves as cofactor. The cofactor is Mg(2+).

It localises to the cytoplasm. The enzyme catalyses Endonucleolytic cleavage to 5'-phosphomonoester.. Endonuclease that specifically degrades the RNA of RNA-DNA hybrids. The chain is Ribonuclease HII from Ralstonia nicotianae (strain ATCC BAA-1114 / GMI1000) (Ralstonia solanacearum).